The sequence spans 138 residues: Lutropin subunit beta (138 aa).

The first 17 residues, 1-17 (LQGLLLWLLLSVGGVWA), serve as a signal peptide directing secretion. Intrachain disulfides connect Cys-26-Cys-74, Cys-40-Cys-89, Cys-43-Cys-127, Cys-51-Cys-105, Cys-55-Cys-107, and Cys-110-Cys-117. A glycan (N-linked (GlcNAc...) asparagine) is linked at Asn-30.

Belongs to the glycoprotein hormones subunit beta family. In terms of assembly, heterodimer of a common alpha chain and a unique beta chain which confers biological specificity to thyrotropin, lutropin, follitropin and gonadotropin.

The protein resides in the secreted. In terms of biological role, promotes spermatogenesis and ovulation by stimulating the testes and ovaries to synthesize steroids. In Canis lupus familiaris (Dog), this protein is Lutropin subunit beta (LHB).